Here is a 210-residue protein sequence, read N- to C-terminus: Thymidylate kinase (210 aa).

An ATP-binding site is contributed by 10–17 (GPEGAGKS).

It belongs to the thymidylate kinase family.

The catalysed reaction is dTMP + ATP = dTDP + ADP. Functionally, phosphorylation of dTMP to form dTDP in both de novo and salvage pathways of dTTP synthesis. In Pseudomonas paraeruginosa (strain DSM 24068 / PA7) (Pseudomonas aeruginosa (strain PA7)), this protein is Thymidylate kinase.